We begin with the raw amino-acid sequence, 429 residues long: Enolase (429 aa).

(2R)-2-phosphoglycerate is bound at residue Gln162. Glu204 acts as the Proton donor in catalysis. Residues Asp241, Glu283, and Asp310 each coordinate Mg(2+). (2R)-2-phosphoglycerate contacts are provided by Lys335, Arg364, Ser365, and Lys386. Lys335 acts as the Proton acceptor in catalysis.

The protein belongs to the enolase family. Requires Mg(2+) as cofactor.

The protein localises to the cytoplasm. The protein resides in the secreted. It localises to the cell surface. It catalyses the reaction (2R)-2-phosphoglycerate = phosphoenolpyruvate + H2O. It functions in the pathway carbohydrate degradation; glycolysis; pyruvate from D-glyceraldehyde 3-phosphate: step 4/5. Its function is as follows. Catalyzes the reversible conversion of 2-phosphoglycerate (2-PG) into phosphoenolpyruvate (PEP). It is essential for the degradation of carbohydrates via glycolysis. The chain is Enolase from Mycobacterium sp. (strain JLS).